Reading from the N-terminus, the 185-residue chain is Auxin-responsive protein IAA34 (185 aa).

The EAR-like (transcriptional repression) signature appears at 63–67 (LGLSL). The PB1 domain occupies 92–180 (WGYVKVTMDG…ERLRITRRND (89 aa)).

Belongs to the Aux/IAA family. In terms of assembly, homodimers and heterodimers.

The protein localises to the nucleus. Its function is as follows. Aux/IAA proteins are short-lived transcriptional factors that function as repressors of early auxin response genes at low auxin concentrations. Repression is thought to result from the interaction with auxin response factors (ARFs), proteins that bind to the auxin-responsive promoter element (AuxRE). Formation of heterodimers with ARF proteins may alter their ability to modulate early auxin response genes expression. This is Auxin-responsive protein IAA34 (IAA34) from Arabidopsis thaliana (Mouse-ear cress).